Here is a 337-residue protein sequence, read N- to C-terminus: Viral cathepsin (337 aa).

An N-terminal signal peptide occupies residues 1–18; that stretch reads MYLIYYYTIIAVATASIA. A propeptide spans 19–126 (activation peptide); that stretch reads NEKIFYDIDS…VTVAGPSART (108 aa). Disulfide bonds link C147–C188, C181–C221, and C276–C324. C150 is a catalytic residue. Catalysis depends on residues H283 and N303.

The protein belongs to the peptidase C1 family. Synthesized as an inactive proenzyme and activated by proteolytic removal of the inhibitory propeptide.

It carries out the reaction Endopeptidase of broad specificity, hydrolyzing substrates of both cathepsin L and cathepsin B.. Cysteine protease that plays an essential role in host liquefaction to facilitate horizontal transmission of the virus. May participate in the degradation of foreign protein expressed by the baculovirus system. This is Viral cathepsin (VCATH) from Spodoptera litura multicapsid nucleopolyhedrovirus (SpltMNPV).